A 339-amino-acid polypeptide reads, in one-letter code: UDP-N-acetylenolpyruvoylglucosamine reductase (339 aa).

The FAD-binding PCMH-type domain maps to 19-189 (VDVQARLFAE…LRVRFKLSRV (171 aa)). Arg166 is an active-site residue. The active-site Proton donor is Ser239. Glu335 is a catalytic residue.

It belongs to the MurB family. FAD serves as cofactor.

Its subcellular location is the cytoplasm. The catalysed reaction is UDP-N-acetyl-alpha-D-muramate + NADP(+) = UDP-N-acetyl-3-O-(1-carboxyvinyl)-alpha-D-glucosamine + NADPH + H(+). The protein operates within cell wall biogenesis; peptidoglycan biosynthesis. Functionally, cell wall formation. The chain is UDP-N-acetylenolpyruvoylglucosamine reductase from Pseudomonas syringae pv. syringae (strain B728a).